We begin with the raw amino-acid sequence, 939 residues long: Valine--tRNA ligase (939 aa).

Positions 47–57 match the 'HIGH' region motif; it reads PNVTGILHMGH. The short motif at 563 to 567 is the 'KMSKS' region element; the sequence is KLSKS. K566 is a binding site for ATP. Residues 874 to 939 adopt a coiled-coil conformation; it reads EHLAKERVRL…QSILDKLASL (66 aa).

It belongs to the class-I aminoacyl-tRNA synthetase family. ValS type 1 subfamily. Monomer.

Its subcellular location is the cytoplasm. It carries out the reaction tRNA(Val) + L-valine + ATP = L-valyl-tRNA(Val) + AMP + diphosphate. Catalyzes the attachment of valine to tRNA(Val). As ValRS can inadvertently accommodate and process structurally similar amino acids such as threonine, to avoid such errors, it has a 'posttransfer' editing activity that hydrolyzes mischarged Thr-tRNA(Val) in a tRNA-dependent manner. The sequence is that of Valine--tRNA ligase from Chlamydia trachomatis serovar L2 (strain ATCC VR-902B / DSM 19102 / 434/Bu).